The primary structure comprises 747 residues: Phosphoribosylformylglycinamidine synthase subunit PurL (747 aa).

Residue His46 is part of the active site. Tyr49 and Lys88 together coordinate ATP. Glu90 provides a ligand contact to Mg(2+). Residues 91 to 94 and Arg113 contribute to the substrate site; that span reads SHNH. The active-site Proton acceptor is His92. Asp114 contacts Mg(2+). Gln237 lines the substrate pocket. Position 265 (Asp265) interacts with Mg(2+). 309-311 is a substrate binding site; it reads ESQ. The ATP site is built by Asp493 and Gly530. Asn531 contacts Mg(2+). Position 533 (Ser533) interacts with substrate.

Belongs to the FGAMS family. Monomer. Part of the FGAM synthase complex composed of 1 PurL, 1 PurQ and 2 PurS subunits.

It is found in the cytoplasm. It carries out the reaction N(2)-formyl-N(1)-(5-phospho-beta-D-ribosyl)glycinamide + L-glutamine + ATP + H2O = 2-formamido-N(1)-(5-O-phospho-beta-D-ribosyl)acetamidine + L-glutamate + ADP + phosphate + H(+). It participates in purine metabolism; IMP biosynthesis via de novo pathway; 5-amino-1-(5-phospho-D-ribosyl)imidazole from N(2)-formyl-N(1)-(5-phospho-D-ribosyl)glycinamide: step 1/2. In terms of biological role, part of the phosphoribosylformylglycinamidine synthase complex involved in the purines biosynthetic pathway. Catalyzes the ATP-dependent conversion of formylglycinamide ribonucleotide (FGAR) and glutamine to yield formylglycinamidine ribonucleotide (FGAM) and glutamate. The FGAM synthase complex is composed of three subunits. PurQ produces an ammonia molecule by converting glutamine to glutamate. PurL transfers the ammonia molecule to FGAR to form FGAM in an ATP-dependent manner. PurS interacts with PurQ and PurL and is thought to assist in the transfer of the ammonia molecule from PurQ to PurL. This is Phosphoribosylformylglycinamidine synthase subunit PurL from Deinococcus radiodurans (strain ATCC 13939 / DSM 20539 / JCM 16871 / CCUG 27074 / LMG 4051 / NBRC 15346 / NCIMB 9279 / VKM B-1422 / R1).